A 134-amino-acid chain; its full sequence is Small ribosomal subunit protein uS11 (134 aa).

The protein belongs to the universal ribosomal protein uS11 family. In terms of assembly, part of the 30S ribosomal subunit. Interacts with proteins S7 and S18. Binds to IF-3.

In terms of biological role, located on the platform of the 30S subunit, it bridges several disparate RNA helices of the 16S rRNA. Forms part of the Shine-Dalgarno cleft in the 70S ribosome. This chain is Small ribosomal subunit protein uS11, found in Paraburkholderia xenovorans (strain LB400).